The chain runs to 375 residues: Carbamoyl phosphate synthase small chain (375 aa).

The interval methionine 1–glycine 186 is CPSase. L-glutamine contacts are provided by serine 45, glycine 238, and glycine 240. The region spanning arginine 190–cysteine 375 is the Glutamine amidotransferase type-1 domain. The Nucleophile role is filled by cysteine 265. Leucine 266, glutamine 269, asparagine 307, glycine 309, and phenylalanine 310 together coordinate L-glutamine. Residues histidine 348 and glutamate 350 contribute to the active site.

The protein belongs to the CarA family. Composed of two chains; the small (or glutamine) chain promotes the hydrolysis of glutamine to ammonia, which is used by the large (or ammonia) chain to synthesize carbamoyl phosphate. Tetramer of heterodimers (alpha,beta)4.

The catalysed reaction is hydrogencarbonate + L-glutamine + 2 ATP + H2O = carbamoyl phosphate + L-glutamate + 2 ADP + phosphate + 2 H(+). It carries out the reaction L-glutamine + H2O = L-glutamate + NH4(+). The protein operates within amino-acid biosynthesis; L-arginine biosynthesis; carbamoyl phosphate from bicarbonate: step 1/1. It functions in the pathway pyrimidine metabolism; UMP biosynthesis via de novo pathway; (S)-dihydroorotate from bicarbonate: step 1/3. Functionally, small subunit of the glutamine-dependent carbamoyl phosphate synthetase (CPSase). CPSase catalyzes the formation of carbamoyl phosphate from the ammonia moiety of glutamine, carbonate, and phosphate donated by ATP, constituting the first step of 2 biosynthetic pathways, one leading to arginine and/or urea and the other to pyrimidine nucleotides. The small subunit (glutamine amidotransferase) binds and cleaves glutamine to supply the large subunit with the substrate ammonia. The polypeptide is Carbamoyl phosphate synthase small chain (Nitratidesulfovibrio vulgaris (strain ATCC 29579 / DSM 644 / CCUG 34227 / NCIMB 8303 / VKM B-1760 / Hildenborough) (Desulfovibrio vulgaris)).